We begin with the raw amino-acid sequence, 102 residues long: Small ribosomal subunit protein uS10 (102 aa).

This sequence belongs to the universal ribosomal protein uS10 family. As to quaternary structure, part of the 30S ribosomal subunit.

Functionally, involved in the binding of tRNA to the ribosomes. The polypeptide is Small ribosomal subunit protein uS10 (Streptococcus pneumoniae (strain CGSP14)).